A 78-amino-acid chain; its full sequence is Rubredoxin (78 aa).

Residues 23-74 (DARLECKICWWEYDPEVGDPVWQIAPGTSFSALPAHWRCPNCDGEAEQFMVL) form the Rubredoxin-like domain. 4 residues coordinate Fe cation: Cys-28, Cys-31, Cys-61, and Cys-64.

This sequence belongs to the rubredoxin family. Requires Fe(3+) as cofactor.

Its function is as follows. Rubredoxin is a small nonheme, iron protein lacking acid-labile sulfide. Its single Fe, chelated to 4 Cys, functions as an electron acceptor and may also stabilize the conformation of the molecule. Could be involved in hydrogenase-linked redox processes. This Cupriavidus necator (strain ATCC 17699 / DSM 428 / KCTC 22496 / NCIMB 10442 / H16 / Stanier 337) (Ralstonia eutropha) protein is Rubredoxin (hoxR).